Reading from the N-terminus, the 197-residue chain is Adrenodoxin-like protein 2, mitochondrial (197 aa).

A mitochondrion-targeting transit peptide spans 1-74 (MVFHRLSRLG…TSFSTTSEKG (74 aa)). The region spanning 81–184 (INVTFVDKDG…GVRLAIPSAT (104 aa)) is the 2Fe-2S ferredoxin-type domain. Cys-118, Cys-124, Cys-127, and Cys-165 together coordinate [2Fe-2S] cluster.

This sequence belongs to the adrenodoxin/putidaredoxin family. [2Fe-2S] cluster serves as cofactor.

The protein localises to the mitochondrion. In terms of biological role, associates with the adrenodoxin reductase MFDR to form an efficient low potential electron transfer chain that is able to reduce cytochrome C. In Arabidopsis thaliana (Mouse-ear cress), this protein is Adrenodoxin-like protein 2, mitochondrial.